The sequence spans 113 residues: Hydrogenase maturation factor HypA (113 aa).

A Ni(2+)-binding site is contributed by histidine 2. Zn(2+)-binding residues include cysteine 73, cysteine 76, cysteine 89, and cysteine 92.

The protein belongs to the HypA/HybF family.

In terms of biological role, involved in the maturation of [NiFe] hydrogenases. Required for nickel insertion into the metal center of the hydrogenase. The polypeptide is Hydrogenase maturation factor HypA (Rhodopseudomonas palustris (strain TIE-1)).